The chain runs to 278 residues: MSTITAAEVNKLRTMTGAGMMDCKKALTESGGDFEAAIDILRKKGQKVSAARAENTTSEGIVSITVSADGKNGKLVALACETEPVSKVADFKNLSEAIMAVAVAKKPATTEELSALPLADGRTVQEHIIDLTGKIGEKVTITSYVSMDGEQVVPYIHSNGKLGVMVALKNTGGKDCSEAGRDVAMQAAAMKPVALDKDDVDPKTVEREIEIGKEQARAEGKPEAMLEKIALGKLNKFYKDATLLNQEFVKDNSKSISQMLDGFHKGLTVSAFVRISLS.

The tract at residues Thr82–Val85 is involved in Mg(2+) ion dislocation from EF-Tu.

It belongs to the EF-Ts family.

It is found in the cytoplasm. Functionally, associates with the EF-Tu.GDP complex and induces the exchange of GDP to GTP. It remains bound to the aminoacyl-tRNA.EF-Tu.GTP complex up to the GTP hydrolysis stage on the ribosome. This is Elongation factor Ts from Cytophaga hutchinsonii (strain ATCC 33406 / DSM 1761 / CIP 103989 / NBRC 15051 / NCIMB 9469 / D465).